Reading from the N-terminus, the 374-residue chain is Dual-specificity RNA methyltransferase RlmN (374 aa).

Catalysis depends on Glu-91, which acts as the Proton acceptor. Positions 97–340 constitute a Radical SAM core domain; that stretch reads EDDRGTLCVS…TTVRKTRGDD (244 aa). Cysteines 104 and 345 form a disulfide. Cys-111, Cys-115, and Cys-118 together coordinate [4Fe-4S] cluster. S-adenosyl-L-methionine-binding positions include 166–167, Ser-198, 220–222, and Asn-302; these read GE and SLH. Cys-345 serves as the catalytic S-methylcysteine intermediate.

It belongs to the radical SAM superfamily. RlmN family. [4Fe-4S] cluster is required as a cofactor.

Its subcellular location is the cytoplasm. It carries out the reaction adenosine(2503) in 23S rRNA + 2 reduced [2Fe-2S]-[ferredoxin] + 2 S-adenosyl-L-methionine = 2-methyladenosine(2503) in 23S rRNA + 5'-deoxyadenosine + L-methionine + 2 oxidized [2Fe-2S]-[ferredoxin] + S-adenosyl-L-homocysteine. The catalysed reaction is adenosine(37) in tRNA + 2 reduced [2Fe-2S]-[ferredoxin] + 2 S-adenosyl-L-methionine = 2-methyladenosine(37) in tRNA + 5'-deoxyadenosine + L-methionine + 2 oxidized [2Fe-2S]-[ferredoxin] + S-adenosyl-L-homocysteine. In terms of biological role, specifically methylates position 2 of adenine 2503 in 23S rRNA and position 2 of adenine 37 in tRNAs. m2A2503 modification seems to play a crucial role in the proofreading step occurring at the peptidyl transferase center and thus would serve to optimize ribosomal fidelity. The protein is Dual-specificity RNA methyltransferase RlmN of Delftia acidovorans (strain DSM 14801 / SPH-1).